Reading from the N-terminus, the 182-residue chain is Transmembrane and coiled-coil domain-containing protein 2 (182 aa).

Residues 51 to 71 traverse the membrane as a helical segment; the sequence is VQIILRISFLILLGIGIYALW. Positions 124-151 form a coiled coil; sequence GLQEKILKKLKTVENKMKNLEGIIVAQK.

The protein resides in the membrane. In Homo sapiens (Human), this protein is Transmembrane and coiled-coil domain-containing protein 2 (TMCO2).